The chain runs to 271 residues: ATP synthase subunit delta (271 aa).

Belongs to the ATPase delta chain family. In terms of assembly, F-type ATPases have 2 components, F(1) - the catalytic core - and F(0) - the membrane proton channel. F(1) has five subunits: alpha(3), beta(3), gamma(1), delta(1), epsilon(1). F(0) has three main subunits: a(1), b(2) and c(10-14). The alpha and beta chains form an alternating ring which encloses part of the gamma chain. F(1) is attached to F(0) by a central stalk formed by the gamma and epsilon chains, while a peripheral stalk is formed by the delta and b chains.

The protein localises to the cell membrane. Functionally, f(1)F(0) ATP synthase produces ATP from ADP in the presence of a proton or sodium gradient. F-type ATPases consist of two structural domains, F(1) containing the extramembraneous catalytic core and F(0) containing the membrane proton channel, linked together by a central stalk and a peripheral stalk. During catalysis, ATP synthesis in the catalytic domain of F(1) is coupled via a rotary mechanism of the central stalk subunits to proton translocation. In terms of biological role, this protein is part of the stalk that links CF(0) to CF(1). It either transmits conformational changes from CF(0) to CF(1) or is implicated in proton conduction. This Beutenbergia cavernae (strain ATCC BAA-8 / DSM 12333 / CCUG 43141 / JCM 11478 / NBRC 16432 / NCIMB 13614 / HKI 0122) protein is ATP synthase subunit delta.